Here is a 310-residue protein sequence, read N- to C-terminus: Homoserine kinase (310 aa).

Position 91–101 (91–101 (PIGSGLGSSAC)) interacts with ATP.

Belongs to the GHMP kinase family. Homoserine kinase subfamily.

It is found in the cytoplasm. It carries out the reaction L-homoserine + ATP = O-phospho-L-homoserine + ADP + H(+). It participates in amino-acid biosynthesis; L-threonine biosynthesis; L-threonine from L-aspartate: step 4/5. In terms of biological role, catalyzes the ATP-dependent phosphorylation of L-homoserine to L-homoserine phosphate. In Escherichia coli O157:H7, this protein is Homoserine kinase.